Consider the following 494-residue polypeptide: Tripartite motif-containing protein 5 (494 aa).

A2 carries the post-translational modification N-acetylalanine. Residues 15–59 form an RING-type zinc finger; sequence CPICLELLTQPLSLDCGHSFCQACLTANHKTSMPDEGERSCPVCR. S86 bears the Phosphoserine mark. The segment at 91 to 133 adopts a B box-type zinc-finger fold; it reads QKVDHCARHGEKLLLFCREDRKVICWLCERSQEHRGHHTFLTE. Residues C96, H99, C118, and H124 each coordinate Zn(2+). The stretch at 132–241 forms a coiled coil; it reads TEEVAQEYQV…LISDLEHRLQ (110 aa). A required for interaction with GABARAP and for autophagy region spans residues 186-199; it reads FEQLRHILDWVESN. In terms of domain architecture, B30.2/SPRY spans 282 to 494; sequence LKVMLKKLRE…VPMTLCSPSS (213 aa).

This sequence belongs to the TRIM/RBCC family. In terms of assembly, can form homodimers and homotrimers. In addition to lower-order dimerization, also exhibits a higher-order multimerization and both low- and high-order multimerizations are essential for its restriction activity. Interacts with BTBD1 and BTBD2. Interacts with PSMC4, PSMC5, PSMD7 and HSPA8/HSC70. Interacts (via B30.2/SPRY domain) with HSPA1A/B. Interacts with PSMC2, MAP3K7/TAK1, TAB2 and TAB3. Interacts with SQSTM1. Interacts with TRIM6 and TRIM34. Interacts with ULK1 (phosphorylated form), GABARAP, GABARAPL1, GABARAPL2, MAP1LC3A, MAP1LC3C and BECN1. In terms of processing, degraded in a proteasome-independent fashion in the absence of viral infection but in a proteasome-dependent fashion following exposure to restriction sensitive virus. Autoubiquitinated in a RING finger- and UBE2D2-dependent manner. Monoubiquitinated by TRIM21. Deubiquitinated by Yersinia YopJ. Ubiquitination may not lead to proteasomal degradation.

The protein resides in the cytoplasm. The protein localises to the nucleus. The catalysed reaction is S-ubiquitinyl-[E2 ubiquitin-conjugating enzyme]-L-cysteine + [acceptor protein]-L-lysine = [E2 ubiquitin-conjugating enzyme]-L-cysteine + N(6)-ubiquitinyl-[acceptor protein]-L-lysine.. The protein operates within protein modification; protein ubiquitination. Functionally, capsid-specific restriction factor that prevents infection from non-host-adapted retroviruses. Blocks viral replication early in the life cycle, after viral entry but before reverse transcription. In addition to acting as a capsid-specific restriction factor, also acts as a pattern recognition receptor that activates innate immune signaling in response to the retroviral capsid lattice. Binding to the viral capsid triggers its E3 ubiquitin ligase activity, and in concert with the heterodimeric ubiquitin conjugating enzyme complex UBE2V1-UBE2N (also known as UBC13-UEV1A complex) generates 'Lys-63'-linked polyubiquitin chains, which in turn are catalysts in the autophosphorylation of the MAP3K7/TAK1 complex (includes TAK1, TAB2, and TAB3). Activation of the MAP3K7/TAK1 complex by autophosphorylation results in the induction and expression of NF-kappa-B and MAPK-responsive inflammatory genes, thereby leading to an innate immune response in the infected cell. Plays a role in regulating autophagy through activation of autophagy regulator BECN1 by causing its dissociation from its inhibitors BCL2 and TAB2. This is Tripartite motif-containing protein 5 (TRIM5) from Nomascus leucogenys (Northern white-cheeked gibbon).